The following is a 134-amino-acid chain: Profilin-1 (134 aa).

Residues C13 and C118 are joined by a disulfide bond. The short motif at A84 to T100 is the Involved in PIP2 interaction element. T114 is modified (phosphothreonine).

The protein belongs to the profilin family. As to quaternary structure, occurs in many kinds of cells as a complex with monomeric actin in a 1:1 ratio. In terms of processing, phosphorylated by MAP kinases.

It localises to the cytoplasm. The protein localises to the cytoskeleton. Binds to actin and affects the structure of the cytoskeleton. At high concentrations, profilin prevents the polymerization of actin, whereas it enhances it at low concentrations. By binding to PIP2, it inhibits the formation of IP3 and DG. The sequence is that of Profilin-1 (PRO1) from Olea europaea (Common olive).